The primary structure comprises 895 residues: Stonin-2 (895 aa).

3 disordered regions span residues 15 to 119, 145 to 222, and 234 to 280; these read WVSF…PPHK, SESS…APPV, and EDNE…KSTL. Residues 64–73 show a composition bias toward basic and acidic residues; it reads SHSEQDDSSE. Residues 145-193 show a composition bias toward polar residues; it reads SESSWTTHSEDTSSPSVAPSYTDLQLINTEEQASGRASGTDSTDNSSSL. The span at 241-251 shows a compositional bias: pro residues; that stretch reads PSPPVPSPKKP. Position 253 is a phosphothreonine (threonine 253). Phosphoserine is present on residues serine 278 and serine 299. 2 consecutive short sequence motifs (NPF) follow at residues 310–312 and 326–328; these read NPF. The interval 386–421 is disordered; the sequence is QIDDPDPVGNTALPDDDPTASVELDAPSPASALSQP. Positions 424-557 constitute an SHD domain; sequence GWPMMLRIPE…DLPVLSMDLS (134 aa). The MHD domain occupies 565–872; it reads EEEITVDVRD…AHYSYKVEIE (308 aa). At serine 759 the chain carries Phosphoserine.

It belongs to the Stoned B family. Interacts with the second C2 domain of synaptotagmins SYT1 and SYT2. Interacts with EPS15, EPS15R and ITSN1. Interacts indirectly with the AP-2 adapter complex. Interacts with TOR1A and COPS4; the interaction controls STON2 protein stability. In terms of processing, phosphorylated in vitro by PKD. Post-translationally, neddylated; deneddylated via its interaction with the COP9 signalosome (CSN) complex through TOR1A and COPS4. Ubiquitinated; leading to its degradation.

The protein resides in the cytoplasm. It localises to the membrane. It is found in the synapse. The protein localises to the synaptosome. Adapter protein involved in endocytic machinery. Involved in the synaptic vesicle recycling. May facilitate clathrin-coated vesicle uncoating. In Mus musculus (Mouse), this protein is Stonin-2 (Ston2).